Reading from the N-terminus, the 258-residue chain is MAVISMKELLEAGVHFGHQTRRWDPKMDEYIFTERNGIHIIDLQKTVKLVDEAYNFIRNASTDGANVLFVGTKKQASDAIAEEATRAGQYYINHRWLGGTLTNWNTIKTRIQRLKDLQTMAEDGTFEQLPKKEVVLLNKQREKLEKFLGGIQDMPGLPDVLFVVDPKKEEIAVKEANMLNIPVVAMIDTNANPDVVDVKIPANDDAIRAVRLITSKIADAVIEGRQGQDSAPEDAFVEGDENTESIEEIANIVEEGNN.

It belongs to the universal ribosomal protein uS2 family.

This is Small ribosomal subunit protein uS2 from Leuconostoc mesenteroides subsp. mesenteroides (strain ATCC 8293 / DSM 20343 / BCRC 11652 / CCM 1803 / JCM 6124 / NCDO 523 / NBRC 100496 / NCIMB 8023 / NCTC 12954 / NRRL B-1118 / 37Y).